The sequence spans 254 residues: Translation initiation factor 2 subunit alpha (254 aa).

The S1 motif domain occupies 10–81; it reads GDLVVVKITE…ERKVVDLSLK (72 aa).

It belongs to the eIF-2-alpha family. Heterotrimer composed of an alpha, a beta and a gamma chain.

In terms of biological role, eIF-2 functions in the early steps of protein synthesis by forming a ternary complex with GTP and initiator tRNA. This Thermoplasma acidophilum (strain ATCC 25905 / DSM 1728 / JCM 9062 / NBRC 15155 / AMRC-C165) protein is Translation initiation factor 2 subunit alpha.